The primary structure comprises 906 residues: Protein translocase subunit SecA (906 aa).

ATP is bound by residues glutamine 89, 107–111 (GEGKT), and aspartate 502. Zn(2+)-binding residues include cysteine 885, cysteine 887, cysteine 896, and histidine 897.

Belongs to the SecA family. Monomer and homodimer. Part of the essential Sec protein translocation apparatus which comprises SecA, SecYEG and auxiliary proteins SecDF-YajC and YidC. The cofactor is Zn(2+).

The protein localises to the cell inner membrane. The protein resides in the cytoplasm. The enzyme catalyses ATP + H2O + cellular proteinSide 1 = ADP + phosphate + cellular proteinSide 2.. Part of the Sec protein translocase complex. Interacts with the SecYEG preprotein conducting channel. Has a central role in coupling the hydrolysis of ATP to the transfer of proteins into and across the cell membrane, serving both as a receptor for the preprotein-SecB complex and as an ATP-driven molecular motor driving the stepwise translocation of polypeptide chains across the membrane. In Rhizobium rhizogenes (strain K84 / ATCC BAA-868) (Agrobacterium radiobacter), this protein is Protein translocase subunit SecA.